The chain runs to 508 residues: Photosystem II CP47 reaction center protein (508 aa).

6 consecutive transmembrane segments (helical) span residues 21 to 36, 101 to 115, 140 to 156, 203 to 218, 237 to 252, and 457 to 472; these read SVHI…WAGS, IVFS…IWHW, GIHL…FGAF, IAAG…FHLS, VLSS…AFVV, and TFAL…HGAR.

The protein belongs to the PsbB/PsbC family. PsbB subfamily. As to quaternary structure, PSII is composed of 1 copy each of membrane proteins PsbA, PsbB, PsbC, PsbD, PsbE, PsbF, PsbH, PsbI, PsbJ, PsbK, PsbL, PsbM, PsbT, PsbX, PsbY, PsbZ, Psb30/Ycf12, at least 3 peripheral proteins of the oxygen-evolving complex and a large number of cofactors. It forms dimeric complexes. The cofactor is Binds multiple chlorophylls. PSII binds additional chlorophylls, carotenoids and specific lipids..

It localises to the plastid. Its subcellular location is the chloroplast thylakoid membrane. In terms of biological role, one of the components of the core complex of photosystem II (PSII). It binds chlorophyll and helps catalyze the primary light-induced photochemical processes of PSII. PSII is a light-driven water:plastoquinone oxidoreductase, using light energy to abstract electrons from H(2)O, generating O(2) and a proton gradient subsequently used for ATP formation. The polypeptide is Photosystem II CP47 reaction center protein (Calycanthus floridus var. glaucus (Eastern sweetshrub)).